A 258-amino-acid polypeptide reads, in one-letter code: Snake venom serine protease (258 aa).

The signal sequence occupies residues Met1–Ala18. A propeptide spanning residues Gln19–Leu24 is cleaved from the precursor. One can recognise a Peptidase S1 domain in the interval Val25 to Ala249. Disulfide bonds link Cys31/Cys163, Cys50/Cys66, Cys98/Cys256, Cys142/Cys210, Cys174/Cys189, and Cys200/Cys225. Catalysis depends on charge relay system residues His65 and Asp110. N-linked (GlcNAc...) asparagine glycosylation is present at Asn154. Catalysis depends on Ser204, which acts as the Charge relay system.

This sequence belongs to the peptidase S1 family. Snake venom subfamily. In terms of assembly, monomer. Expressed by the venom gland.

The protein resides in the secreted. In terms of biological role, snake venom serine protease that may act in the hemostasis system of the prey. The chain is Snake venom serine protease from Lachesis stenophrys (Central American bushmaster).